Here is a 465-residue protein sequence, read N- to C-terminus: ATP synthase subunit beta (465 aa).

154–161 (GGAGVGKT) serves as a coordination point for ATP.

It belongs to the ATPase alpha/beta chains family. As to quaternary structure, F-type ATPases have 2 components, CF(1) - the catalytic core - and CF(0) - the membrane proton channel. CF(1) has five subunits: alpha(3), beta(3), gamma(1), delta(1), epsilon(1). CF(0) has three main subunits: a(1), b(2) and c(9-12). The alpha and beta chains form an alternating ring which encloses part of the gamma chain. CF(1) is attached to CF(0) by a central stalk formed by the gamma and epsilon chains, while a peripheral stalk is formed by the delta and b chains.

Its subcellular location is the cell inner membrane. The enzyme catalyses ATP + H2O + 4 H(+)(in) = ADP + phosphate + 5 H(+)(out). Its function is as follows. Produces ATP from ADP in the presence of a proton gradient across the membrane. The catalytic sites are hosted primarily by the beta subunits. The polypeptide is ATP synthase subunit beta (Methylobacillus flagellatus (strain ATCC 51484 / DSM 6875 / VKM B-1610 / KT)).